The chain runs to 439 residues: Gnt-II system L-idonate transporter (439 aa).

Residues 1 to 11 (MPLIIIAAGVA) lie on the Periplasmic side of the membrane. Residues 12–34 (LLLILMIGFKVNGFIALVLVAAV) traverse the membrane as a helical segment. At 35–53 (VGFAEGMDAQAVLHSIQNG) the chain is on the cytoplasmic side. The helical transmembrane segment at 54-76 (IGSTLGGLAMILGFGAMLGKLIS) threads the bilayer. Residues 77–96 (DTGAAQRIATTLIATFGKKR) lie on the Periplasmic side of the membrane. Residues 97-114 (VQWALVITGLVVGLAMFF) traverse the membrane as a helical segment. Over 115–118 (EVGF) the chain is Cytoplasmic. A helical membrane pass occupies residues 119-141 (VLLLPLVFTIVASSGLPLLYVGV). Topologically, residues 142–170 (PMVAALSVTHCFLPPHPGPTAIATIFEAN) are periplasmic. The chain crosses the membrane as a helical span at residues 171 to 193 (LGTTLLYGFIITIPTVIVAGPLF). The Cytoplasmic portion of the chain corresponds to 194-218 (SKLLTRFEKAPPEGLFNPHLFSEEE). A helical membrane pass occupies residues 219-241 (MPSFWNSIFAAVIPVILMAIAAV). The Periplasmic segment spans residues 242–253 (CEITLPKTNTVR). Residues 254 to 276 (LFFEFVGNPAVALFIAIVIAIFT) form a helical membrane-spanning segment. Residues 277-290 (LGRRNGRTIEQIMD) lie on the Cytoplasmic side of the membrane. Residues 291–310 (IIGDSIGAIAMIVFIIAGGG) traverse the membrane as a helical segment. Over 311–322 (AFKQVLVDSGVG) the chain is Periplasmic. A helical transmembrane segment spans residues 323 to 345 (HYISHLMTGTTLSPLLMCWTVAA). The Cytoplasmic portion of the chain corresponds to 346–348 (LLR). A helical transmembrane segment spans residues 349 to 371 (IALGSATVAAITTAGVVLPIINV). At 372–377 (THADPA) the chain is on the periplasmic side. The helical transmembrane segment at 378-400 (LMVLATGAGSVIASHVNDPGFWL) threads the bilayer. Topologically, residues 401–414 (FKGYFNLTVGETLR) are cytoplasmic. Residues 415 to 437 (TWTVMETLISIMGLLGVLAINAV) traverse the membrane as a helical segment. At 438–439 (LH) the chain is on the periplasmic side.

The protein belongs to the GntP permease family.

Its subcellular location is the cell inner membrane. It carries out the reaction L-idonate(in) + H(+)(in) = L-idonate(out) + H(+)(out). It catalyses the reaction D-gluconate(in) + H(+)(in) = D-gluconate(out) + H(+)(out). The catalysed reaction is 5-dehydro-D-gluconate(in) + H(+)(in) = 5-dehydro-D-gluconate(out) + H(+)(out). It participates in carbohydrate acid metabolism; L-idonate degradation. In terms of biological role, transporter which is probably involved in L-idonate metabolism. Transports L-idonate from the periplasm across the inner membrane. Can also transport D-gluconate and 5-keto-D-gluconate. It has been reported that gluconate uptake probably occurs via a proton-symport mechanism in E.coli. In Escherichia coli (strain K12), this protein is Gnt-II system L-idonate transporter.